The primary structure comprises 908 residues: Translation initiation factor IF-2 (908 aa).

Residues 145 to 312 (EIPGLTQRAK…KGKKRQAEKI (168 aa)) are disordered. Residues 167–177 (VVERPEARPSA) are compositionally biased toward basic and acidic residues. Composition is skewed to low complexity over residues 194 to 217 (RPEG…PRPG) and 263 to 276 (VAGA…GAAV). A compositionally biased stretch (basic and acidic residues) spans 278–296 (KRKEEFKKTELFEKHERVF). The tr-type G domain occupies 408-577 (KRPPVVTIMG…LLQADVLELK (170 aa)). A G1 region spans residues 417–424 (GHVDHGKT). Residue 417-424 (GHVDHGKT) coordinates GTP. The segment at 442–446 (GITQH) is G2. Residues 463-466 (DTPG) are G3. GTP-binding positions include 463 to 467 (DTPGH) and 517 to 520 (NKID). The tract at residues 517–520 (NKID) is G4. Positions 553–555 (SAK) are G5.

This sequence belongs to the TRAFAC class translation factor GTPase superfamily. Classic translation factor GTPase family. IF-2 subfamily.

It localises to the cytoplasm. Functionally, one of the essential components for the initiation of protein synthesis. Protects formylmethionyl-tRNA from spontaneous hydrolysis and promotes its binding to the 30S ribosomal subunits. Also involved in the hydrolysis of GTP during the formation of the 70S ribosomal complex. This chain is Translation initiation factor IF-2, found in Geotalea daltonii (strain DSM 22248 / JCM 15807 / FRC-32) (Geobacter daltonii).